The primary structure comprises 290 residues: 33 kDa chaperonin (290 aa).

2 disulfides stabilise this stretch: Cys235–Cys237 and Cys268–Cys271.

The protein belongs to the HSP33 family. Post-translationally, under oxidizing conditions two disulfide bonds are formed involving the reactive cysteines. Under reducing conditions zinc is bound to the reactive cysteines and the protein is inactive.

It localises to the cytoplasm. In terms of biological role, redox regulated molecular chaperone. Protects both thermally unfolding and oxidatively damaged proteins from irreversible aggregation. Plays an important role in the bacterial defense system toward oxidative stress. The polypeptide is 33 kDa chaperonin (Streptococcus pneumoniae serotype 19F (strain G54)).